A 393-amino-acid polypeptide reads, in one-letter code: Chalcone synthase LF2 (393 aa).

The active site involves cysteine 164.

This sequence belongs to the thiolase-like superfamily. Chalcone/stilbene synthases family.

The catalysed reaction is (E)-4-coumaroyl-CoA + 3 malonyl-CoA + 3 H(+) = 2',4,4',6'-tetrahydroxychalcone + 3 CO2 + 4 CoA. The protein operates within secondary metabolite biosynthesis; flavonoid biosynthesis. Functionally, the primary product of this enzyme is 4,2',4',6'-tetrahydroxychalcone (also termed naringenin-chalcone or chalcone) which can under specific conditions spontaneously isomerize into naringenin. This is Chalcone synthase LF2 (CHS-LF2) from Ipomoea batatas (Sweet potato).